The following is a 124-amino-acid chain: Small ribosomal subunit protein uS12 (124 aa).

Residue Asp89 is modified to 3-methylthioaspartic acid.

This sequence belongs to the universal ribosomal protein uS12 family. Part of the 30S ribosomal subunit. Contacts proteins S8 and S17. May interact with IF1 in the 30S initiation complex.

Its function is as follows. With S4 and S5 plays an important role in translational accuracy. Interacts with and stabilizes bases of the 16S rRNA that are involved in tRNA selection in the A site and with the mRNA backbone. Located at the interface of the 30S and 50S subunits, it traverses the body of the 30S subunit contacting proteins on the other side and probably holding the rRNA structure together. The combined cluster of proteins S8, S12 and S17 appears to hold together the shoulder and platform of the 30S subunit. The sequence is that of Small ribosomal subunit protein uS12 from Blochmanniella pennsylvanica (strain BPEN).